A 165-amino-acid polypeptide reads, in one-letter code: MDYQNNVSEERVAEMIWDAVSEGATLKDVHGIPQDMMDGLYAHAYEFYNQGRLDEAETFFRFLCIYDFYNPDYTMGLAAVCQLKKQFQKACDLYAVAFTLLKNDYRPVFFTGQCQLLMRKAAKARQCFELVNERTEDESLRAKALVYLEALKTAETEQHSEQEKE.

The protein belongs to the LcrH/SycD chaperone family. As to quaternary structure, dimer or higher-order oligomers.

It is found in the cytoplasm. Its function is as follows. Type III secretion-associated chaperone required for SipB and SipC stabilization. Prevents premature association of SipB with SipC, which may lead to their targeting for degradation. Along with InvF, required for transcription activation of sigDE (sopB pipC), sicAsipBCDA, and sopE. This Salmonella dublin protein is Chaperone protein SicA (sicA).